The following is a 222-amino-acid chain: UPF0128 protein TK2294 (222 aa).

The protein belongs to the UPF0128 family.

The polypeptide is UPF0128 protein TK2294 (Thermococcus kodakarensis (strain ATCC BAA-918 / JCM 12380 / KOD1) (Pyrococcus kodakaraensis (strain KOD1))).